A 169-amino-acid polypeptide reads, in one-letter code: MAMTKKFKVSFDVTAKMSSDVQAILEKDMLHLCKQVGSGAIVPNGKQKEMIVQFLTHGMEGLMTFVVRTSFREAIKDMHEEYADKDSFKQSPATVREVFLMSDYLKVLQAIKSCPKTFQSNYVRNNASLVAEAASRGHISCLTTSGRNGGAWEITASGTRFLKRMGGCV.

The protein is Fusion protein 5.5/5.7 of Escherichia coli (Bacteriophage T7).